A 115-amino-acid polypeptide reads, in one-letter code: NADH-ubiquinone oxidoreductase chain 3 (115 aa).

3 helical membrane-spanning segments follow: residues 4–24, 55–75, and 86–106; these read LVTM…AFWL, FFLV…LLPM, and TMTL…AYEW.

It belongs to the complex I subunit 3 family. In terms of assembly, core subunit of respiratory chain NADH dehydrogenase (Complex I) which is composed of 45 different subunits. Interacts with TMEM186. Interacts with TMEM242.

Its subcellular location is the mitochondrion inner membrane. The catalysed reaction is a ubiquinone + NADH + 5 H(+)(in) = a ubiquinol + NAD(+) + 4 H(+)(out). Functionally, core subunit of the mitochondrial membrane respiratory chain NADH dehydrogenase (Complex I) which catalyzes electron transfer from NADH through the respiratory chain, using ubiquinone as an electron acceptor. Essential for the catalytic activity of complex I. This chain is NADH-ubiquinone oxidoreductase chain 3, found in Nelsonia neotomodon (Diminutive woodrat).